A 293-amino-acid chain; its full sequence is Elongation factor Ts (293 aa).

Residues 79–82 (TDFV) are involved in Mg(2+) ion dislocation from EF-Tu.

The protein belongs to the EF-Ts family.

The protein localises to the cytoplasm. Its function is as follows. Associates with the EF-Tu.GDP complex and induces the exchange of GDP to GTP. It remains bound to the aminoacyl-tRNA.EF-Tu.GTP complex up to the GTP hydrolysis stage on the ribosome. This is Elongation factor Ts from Macrococcus caseolyticus (strain JCSC5402) (Macrococcoides caseolyticum).